The chain runs to 381 residues: Creatine kinase M-type (381 aa).

Positions 11-98 (KLNYKPQEEY…FDPIIQDRHG (88 aa)) constitute a Phosphagen kinase N-terminal domain. Residues 125–367 (YVLSSRVRTG…KLMVEMEKKL (243 aa)) enclose the Phosphagen kinase C-terminal domain. 128–132 (SSRVR) contributes to the ATP binding site. Ser164 carries the post-translational modification Phosphoserine. The residue at position 166 (Thr166) is a Phosphothreonine. The residue at position 178 (Ser178) is a Phosphoserine. Phosphothreonine is present on Thr180. His191 lines the ATP pocket. Residue Ser199 is modified to Phosphoserine. Arg236 and Arg292 together coordinate ATP. 2 positions are modified to phosphothreonine: Thr313 and Thr322. Residues 320–325 (RGTGGV) and Asp335 contribute to the ATP site. At Ser372 the chain carries Phosphoserine.

The protein belongs to the ATP:guanido phosphotransferase family. As to quaternary structure, dimer of identical or non-identical chains, which can be either B (brain type) or M (muscle type). With MM being the major form in skeletal muscle and myocardium, MB existing in myocardium, and BB existing in many tissues, especially brain.

It is found in the cytoplasm. The catalysed reaction is creatine + ATP = N-phosphocreatine + ADP + H(+). Functionally, reversibly catalyzes the transfer of phosphate between ATP and various phosphogens (e.g. creatine phosphate). Creatine kinase isoenzymes play a central role in energy transduction in tissues with large, fluctuating energy demands, such as skeletal muscle, heart, brain and spermatozoa. The protein is Creatine kinase M-type (Ckm) of Mus musculus (Mouse).